The chain runs to 62 residues: Paralithocin 1 (62 aa).

Residues 1 to 23 (MGPMKVLLVLLVVMVAAPHIADA) form the signal peptide. 4 disulfide bridges follow: C29–C55, C33–C51, C37–C49, and C42–C52. The residue at position 61 (Y61) is a Tyrosine amide; partial.

It belongs to the paralithocin family. Post-translationally, the amidated form is probably the active form.

Its function is as follows. Has weak antibacterial activity, mainly against marine Gram-positive bacteria like C.maltaromaticum (MIC=200 uM), C.mobile (MIC=100 uM), C.divergens (MIC=200 uM) and C.funditum (MIC=200 uM) but also against C.glutamicum (MIC=50 uM). Has very little or no activity against Gram-negative bacteria. This Paralithodes camtschaticus (Red king crab) protein is Paralithocin 1.